The primary structure comprises 247 residues: Geranylgeranylglyceryl phosphate synthase (247 aa).

Mg(2+)-binding residues include aspartate 23 and serine 52. Residues 171 to 177 (YLEAGSG), 203 to 204 (GG), and 225 to 226 (GT) contribute to the sn-glycerol 1-phosphate site.

This sequence belongs to the GGGP/HepGP synthase family. Group II subfamily. Mg(2+) serves as cofactor.

The protein localises to the cytoplasm. It carries out the reaction sn-glycerol 1-phosphate + (2E,6E,10E)-geranylgeranyl diphosphate = sn-3-O-(geranylgeranyl)glycerol 1-phosphate + diphosphate. It functions in the pathway membrane lipid metabolism; glycerophospholipid metabolism. Prenyltransferase that catalyzes the transfer of the geranylgeranyl moiety of geranylgeranyl diphosphate (GGPP) to the C3 hydroxyl of sn-glycerol-1-phosphate (G1P). This reaction is the first ether-bond-formation step in the biosynthesis of archaeal membrane lipids. In Methanosarcina acetivorans (strain ATCC 35395 / DSM 2834 / JCM 12185 / C2A), this protein is Geranylgeranylglyceryl phosphate synthase.